Consider the following 211-residue polypeptide: Bacteriorhodopsin (211 aa).

Residues 1–19 form a helical membrane-spanning segment; that stretch reads IWLWLGTAGMFLGMLYFIA. Residues 20–33 are Cytoplasmic-facing; sequence RGWGETDSRRQKFY. A helical membrane pass occupies residues 34–52; that stretch reads IATILITAIAFVNYLAMAL. At 53–68 the chain is on the extracellular side; it reads GFGLTIVEFAGEEHPI. The helical transmembrane segment at 69 to 86 threads the bilayer; sequence YWARYSDWLFTTPLLLYD. The Cytoplasmic segment spans residues 87-97; sequence LGLLAGADRNT. Residues 98–117 traverse the membrane as a helical segment; the sequence is ITSLVSLDVLMIGTGLVATL. The Extracellular portion of the chain corresponds to 118-130; the sequence is SAGSGVLSAGAER. A helical transmembrane segment spans residues 131–150; the sequence is LVWWGISTAFLLVLLYFLFS. The Cytoplasmic portion of the chain corresponds to 151-168; it reads SLSGRVADLPSDTRSTFK. The chain crosses the membrane as a helical span at residues 169–187; sequence TLRNLVTVVWLVYPVWWLI. At 188–199 the chain is on the extracellular side; it reads GTEGIGLVGIGI. The helical transmembrane segment at 200–211 threads the bilayer; it reads ETAGFMVIDLTA.

The protein belongs to the archaeal/bacterial/fungal opsin family.

Its subcellular location is the cell membrane. Light-driven proton pump. The polypeptide is Bacteriorhodopsin (bop) (Halobacterium halobium (strain port)).